Here is a 476-residue protein sequence, read N- to C-terminus: MVAMARWPWRVLLPLLLLHSSPVFFVFAQEGQDNDPSTLFKRALEMMNLRKYDGSLGLLNAVLEVEPNHSEAYRQRASVLRHKCRYKEAEGDYSKYLELKPGSSSVEKELSQLLQAQNALESAYGQFESHDFSKVLDYINKIVLVFSPDCLKAKLLKAKALLALKDYSTVISETGFILKEDEDNLDALLLRGRAYYYLADHDVASRHYQKGLRLDPEHSELKKAYFGLKNLVKKTKSAEDNAAKGKLRVSAEDYKASLAMDPDHTSYNVHLYLGLCKVLVKLGRGKEAISSCTEALNIDGELVDALTQRGEAKLLTEDWEGAVQDLKEAAQKSPQDMGIREALMRAEKQLKLSKRKDWYKILGISKTASAAEIKRAYKKLALQWHPDKNVDKREEAENMFREIAAAYEVLGDEDKRVRYDRGEDLDEMNMGGGGGGGFNPFGGGGQQYTFHYDGGFHGGGGFPGGGFPGGFQFNFG.

The first 28 residues, 1 to 28 (MVAMARWPWRVLLPLLLLHSSPVFFVFA), serve as a signal peptide directing secretion. TPR repeat units lie at residues 36-69 (PSTL…EPNH), 70-103 (SEAY…KPGS), 116-150 (AQNA…SPDC), 152-184 (KAKL…DEDN), 185-218 (LDAL…DPEH), 231-264 (LVKK…DPDH), 269-302 (VHLY…DGEL), and 304-336 (DALT…SPQD). Residues 357–423 (DWYKILGISK…DKRVRYDRGE (67 aa)) enclose the J domain.

Interacts with BIP1.

It localises to the endoplasmic reticulum lumen. May play a role in protein folding in the endoplasmic reticulum. In Oryza sativa subsp. japonica (Rice), this protein is DnaJ protein P58IPK homolog A.